A 265-amino-acid polypeptide reads, in one-letter code: 3-methyl-2-oxobutanoate hydroxymethyltransferase (265 aa).

Mg(2+) is bound by residues Asp-44 and Asp-83. 3-methyl-2-oxobutanoate-binding positions include 44-45, Asp-83, and Lys-113; that span reads DS. Glu-115 lines the Mg(2+) pocket. Glu-183 serves as the catalytic Proton acceptor.

It belongs to the PanB family. Homodecamer; pentamer of dimers. Mg(2+) serves as cofactor.

The protein resides in the cytoplasm. The enzyme catalyses 3-methyl-2-oxobutanoate + (6R)-5,10-methylene-5,6,7,8-tetrahydrofolate + H2O = 2-dehydropantoate + (6S)-5,6,7,8-tetrahydrofolate. It participates in cofactor biosynthesis; (R)-pantothenate biosynthesis; (R)-pantoate from 3-methyl-2-oxobutanoate: step 1/2. In terms of biological role, catalyzes the reversible reaction in which hydroxymethyl group from 5,10-methylenetetrahydrofolate is transferred onto alpha-ketoisovalerate to form ketopantoate. The protein is 3-methyl-2-oxobutanoate hydroxymethyltransferase of Leptospira borgpetersenii serovar Hardjo-bovis (strain JB197).